Consider the following 64-residue polypeptide: Alpha-conotoxin-like Ac1.1b (64 aa).

The N-terminal stretch at 1-21 is a signal peptide; that stretch reads MGMRMMFTLFLLVVLTTTVVS. A propeptide spanning residues 22-47 is cleaved from the precursor; it reads FPSDSASDGRDDEAKDERSDMYKSKR. Positions 23-46 are disordered; that stretch reads PSDSASDGRDDEAKDERSDMYKSK. Residues 28-44 are compositionally biased toward basic and acidic residues; it reads SDGRDDEAKDERSDMYK. 2 disulfides stabilise this stretch: cysteine 51–cysteine 56 and cysteine 52–cysteine 62. Cysteine 62 bears the Cysteine amide mark.

Belongs to the conotoxin A superfamily. As to expression, expressed by the venom duct.

Its subcellular location is the secreted. In terms of biological role, alpha-conotoxins act on postsynaptic membranes, they bind to the nicotinic acetylcholine receptors (nAChR) and thus inhibit them. The sequence is that of Alpha-conotoxin-like Ac1.1b from Conus achatinus (Little frog cone).